Reading from the N-terminus, the 60-residue chain is Large ribosomal subunit protein uL30 (60 aa).

This sequence belongs to the universal ribosomal protein uL30 family. Part of the 50S ribosomal subunit.

The protein is Large ribosomal subunit protein uL30 of Streptococcus pneumoniae (strain Hungary19A-6).